The primary structure comprises 99 residues: Putative RNA-binding protein RbpE (99 aa).

An RRM domain is found at 2–79 (SIYVGNLSYS…RVLKVNKARP (78 aa)). The segment at 78–99 (RPREEKGARSGGGSWSRNNGGY) is disordered. Positions 86-99 (RSGGGSWSRNNGGY) are enriched in gly residues.

This is Putative RNA-binding protein RbpE (rbpE) from Nostoc sp. (strain PCC 7120 / SAG 25.82 / UTEX 2576).